Here is a 455-residue protein sequence, read N- to C-terminus: Transmembrane protease serine 5 (455 aa).

Residues 1–49 are Cytoplasmic-facing; the sequence is MSPTLDDQSPMEIRCTEEGAGPGIFRMELGDQRQSISQSQRWCCLQRGC. Residues 50 to 70 traverse the membrane as a helical; Signal-anchor for type II membrane protein segment; that stretch reads VILGVLGLLAGAGIASWLLVL. Topologically, residues 71-455 are extracellular; that stretch reads YLWPAASPSI…DWIHDTVQVR (385 aa). An SRCR domain is found at 112-207; sequence FRINGEDLLL…SGRIVSLKCS (96 aa). 7 cysteine pairs are disulfide-bonded: cysteine 135–cysteine 196, cysteine 148–cysteine 206, cysteine 209–cysteine 328, cysteine 243–cysteine 259, cysteine 342–cysteine 411, cysteine 374–cysteine 390, and cysteine 401–cysteine 429. Asparagine 163 and asparagine 170 each carry an N-linked (GlcNAc...) asparagine glycan. A Peptidase S1 domain is found at 218 to 453; it reads IVGGQAVASG…FLDWIHDTVQ (236 aa). Residues histidine 258 and aspartate 308 each act as charge relay system in the active site. Residues asparagine 319 and asparagine 375 are each glycosylated (N-linked (GlcNAc...) asparagine). The active-site Charge relay system is the serine 405.

The protein belongs to the peptidase S1 family.

The protein resides in the cell membrane. Its function is as follows. May play a role in hearing. The sequence is that of Transmembrane protease serine 5 (Tmprss5) from Mus musculus (Mouse).